Consider the following 215-residue polypeptide: Protein C' (215 aa).

Disordered stretches follow at residues 12 to 34 and 51 to 71; these read MPSF…SRSR and SEGT…QALP. The tract at residues 15–22 is involved in self-degradation and in host STAT1 degradation; that stretch reads FLKKILKL. Residues 51-65 show a composition bias toward polar residues; the sequence is SEGTEAGSTTPSTLP.

It belongs to the respirovirus protein C family. As to quaternary structure, the different isoforms interact (via C-terminus) with unphosphorylated and phosphorylated human STAT1 (via N-terminus), favoring the formation of parallel STAT1 homodimers. The different isoforms do not interact with host STAT2. C protein interacts with L protein; this interaction has an inhibitory effect on viral transcription and replication. In terms of processing, Y1 and Y2 proteins are produced not only by alternative initiation, but also by proteolytic cleavage of C'. Only alternative initiation is detected in vitro, whereas in vivo cleavage seems to be predominant.

It is found in the host cytoplasm. In terms of biological role, the different products prevent the establishment of cellular antiviral state by blocking the interferon-alpha/beta (IFN-alpha/beta) and IFN-gamma signaling pathways. They inhibit IFN-alpha/beta induced tyrosine phosphorylation of STAT1 and STAT2. Blocking the IFN-alpha/beta pathway requires binding to STAT1 in the cytoplasm. They inhibit IFN-gamma induced serine phosphorylation of STAT1. Block the IFN-gamma pathway by binding to and stabilizing the parallel form of the STAT1 dimer, further inducing high-molecular-weight complex formation and inhibition of transcription by IFN-gamma. May also have a role in preventing the cell to enter apoptosis. Modulate regulation of viral transcription and replication. Overexpression inhibits the viral RNA polymerase. The absence of all C', C, Y1 and Y2 proteins leads to viral delayed growth. Plays an important role in virion particles release. Modulates virion shape. The protein is Protein C' (P/V/C) of Sendai virus (strain Harris) (SeV).